Consider the following 259-residue polypeptide: Adenosylcobinamide-GDP ribazoletransferase (259 aa).

The next 6 helical transmembrane spans lie at 27–47 (ITFL…ILYI), 51–71 (FSHL…NGLN), 100–120 (VGAG…LSLA), 124–144 (LYIG…SMMI), 175–195 (FLAI…VIVA), and 219–239 (VIGF…IIIA).

The protein belongs to the CobS family. Requires Mg(2+) as cofactor.

The protein localises to the cell membrane. It carries out the reaction alpha-ribazole + adenosylcob(III)inamide-GDP = adenosylcob(III)alamin + GMP + H(+). It catalyses the reaction alpha-ribazole 5'-phosphate + adenosylcob(III)inamide-GDP = adenosylcob(III)alamin 5'-phosphate + GMP + H(+). It participates in cofactor biosynthesis; adenosylcobalamin biosynthesis; adenosylcobalamin from cob(II)yrinate a,c-diamide: step 7/7. In terms of biological role, joins adenosylcobinamide-GDP and alpha-ribazole to generate adenosylcobalamin (Ado-cobalamin). Also synthesizes adenosylcobalamin 5'-phosphate from adenosylcobinamide-GDP and alpha-ribazole 5'-phosphate. The protein is Adenosylcobinamide-GDP ribazoletransferase of Thermoplasma volcanium (strain ATCC 51530 / DSM 4299 / JCM 9571 / NBRC 15438 / GSS1).